The following is a 121-amino-acid chain: NAD(P)H-quinone oxidoreductase subunit M (121 aa).

Belongs to the complex I NdhM subunit family. In terms of assembly, NDH-1 can be composed of about 15 different subunits; different subcomplexes with different compositions have been identified which probably have different functions.

Its subcellular location is the cellular thylakoid membrane. It carries out the reaction a plastoquinone + NADH + (n+1) H(+)(in) = a plastoquinol + NAD(+) + n H(+)(out). The catalysed reaction is a plastoquinone + NADPH + (n+1) H(+)(in) = a plastoquinol + NADP(+) + n H(+)(out). Its function is as follows. NDH-1 shuttles electrons from an unknown electron donor, via FMN and iron-sulfur (Fe-S) centers, to quinones in the respiratory and/or the photosynthetic chain. The immediate electron acceptor for the enzyme in this species is believed to be plastoquinone. Couples the redox reaction to proton translocation, and thus conserves the redox energy in a proton gradient. Cyanobacterial NDH-1 also plays a role in inorganic carbon-concentration. This Synechococcus sp. (strain JA-2-3B'a(2-13)) (Cyanobacteria bacterium Yellowstone B-Prime) protein is NAD(P)H-quinone oxidoreductase subunit M.